The sequence spans 148 residues: Deoxyuridine 5'-triphosphate nucleotidohydrolase (148 aa).

Residues 67–69 (RSG), Asn-80, 84–86 (LID), and Met-94 each bind substrate.

It belongs to the dUTPase family. Mg(2+) serves as cofactor.

The catalysed reaction is dUTP + H2O = dUMP + diphosphate + H(+). The protein operates within pyrimidine metabolism; dUMP biosynthesis; dUMP from dCTP (dUTP route): step 2/2. Its function is as follows. This enzyme is involved in nucleotide metabolism: it produces dUMP, the immediate precursor of thymidine nucleotides and it decreases the intracellular concentration of dUTP so that uracil cannot be incorporated into DNA. This Ralstonia pickettii (strain 12J) protein is Deoxyuridine 5'-triphosphate nucleotidohydrolase.